The primary structure comprises 381 residues: tRNA pseudouridine synthase D (381 aa).

Residue aspartate 81 is the Nucleophile of the active site. In terms of domain architecture, TRUD spans 160–335; that stretch reads GMPNYFGSQR…TLGSRRFFWV (176 aa).

Belongs to the pseudouridine synthase TruD family.

The enzyme catalyses uridine(13) in tRNA = pseudouridine(13) in tRNA. Its function is as follows. Responsible for synthesis of pseudouridine from uracil-13 in transfer RNAs. This Helicobacter pylori (strain P12) protein is tRNA pseudouridine synthase D.